The primary structure comprises 130 residues: Small ribosomal subunit protein uS8 (130 aa).

Belongs to the universal ribosomal protein uS8 family. In terms of assembly, part of the 30S ribosomal subunit.

One of the primary rRNA binding proteins, it binds directly to 16S rRNA central domain where it helps coordinate assembly of the platform of the 30S subunit. This chain is Small ribosomal subunit protein uS8, found in Methanosarcina barkeri (strain Fusaro / DSM 804).